The chain runs to 928 residues: DENN domain-containing protein 2C (928 aa).

Disordered stretches follow at residues 67–105 and 245–266; these read KSKNLDVTSRENVGLDINENTKSHDQSENENKKHEYDDT and QSSLASSQEPEPKKYGGKIRGR. Basic and acidic residues predominate over residues 85 to 105; sequence ENTKSHDQSENENKKHEYDDT. The residue at position 271 (Ser-271) is a Phosphoserine. The segment at 428–456 is disordered; the sequence is KLHSYTGKELPPTKGETSGNESDAEYLPK. Positions 492–641 constitute a uDENN domain; sequence ELFVVVSLQK…PFPAPGRTIT (150 aa). Positions 663–796 constitute a cDENN domain; it reads RLEHVDFKCL…LQAALMQILE (134 aa). The region spanning 798 to 888 is the dDENN domain; the sequence is RNEILTQEQN…QDRELRKSGV (91 aa).

Guanine nucleotide exchange factor (GEF) which may activate RAB9A and RAB9B. Promotes the exchange of GDP to GTP, converting inactive GDP-bound Rab proteins into their active GTP-bound form. In Homo sapiens (Human), this protein is DENN domain-containing protein 2C (DENND2C).